The following is a 501-amino-acid chain: Lysine--tRNA ligase (501 aa).

Mg(2+) is bound by residues E411 and E418.

Belongs to the class-II aminoacyl-tRNA synthetase family. In terms of assembly, homodimer. It depends on Mg(2+) as a cofactor.

It is found in the cytoplasm. The catalysed reaction is tRNA(Lys) + L-lysine + ATP = L-lysyl-tRNA(Lys) + AMP + diphosphate. The sequence is that of Lysine--tRNA ligase from Pseudomonas aeruginosa (strain LESB58).